The following is a 73-amino-acid chain: U-scoloptoxin(15)-Sm3a (73 aa).

The signal sequence occupies residues 1–23 (MERKVFLLLFVIVLLTLPGFMSA).

Belongs to the scoloptoxin-15 family. Contains 2 disulfide bonds. In terms of tissue distribution, expressed by the venom gland.

The protein localises to the secreted. This chain is U-scoloptoxin(15)-Sm3a, found in Scolopendra morsitans (Tanzanian blue ringleg centipede).